Reading from the N-terminus, the 427-residue chain is Protein TIFY 6a (427 aa).

Basic and acidic residues predominate over residues 1–25 (MERDFLGAIGRKEEAAGKPEEHSDY). The interval 1–33 (MERDFLGAIGRKEEAAGKPEEHSDYRGGGGGAS) is disordered. In terms of domain architecture, Tify spans 196-231 (QNPKVTQMTIFYDGLVNVFDNIPVEKAQELMLLASR). Composition is skewed to polar residues over residues 293-303 (LPKSSSSSNDS) and 317-327 (PLSQASPSQPI). A disordered region spans residues 293 to 327 (LPKSSSSSNDSAGPKSGGLPLAVTPLSQASPSQPI). Positions 343–367 (PQARKASLARFLEKRKERVSSVAPY) match the Jas motif. A Nuclear localization signal motif is present at residues 345-352 (ARKASLAR). The interval 360-427 (RVSSVAPYPS…QEPPSTKLQI (68 aa)) is disordered. Composition is skewed to polar residues over residues 369 to 402 (SSKSPLESSDTIGSPSTPSKSSCTDITPSTNNCE) and 411 to 427 (RNISFSSQEPPSTKLQI).

The protein belongs to the TIFY/JAZ family. Post-translationally, ubiquitinated.

Its subcellular location is the nucleus. Functionally, repressor of jasmonate responses. The sequence is that of Protein TIFY 6a from Oryza sativa subsp. indica (Rice).